The chain runs to 1852 residues: Dihydropyridine-sensitive L-type skeletal muscle calcium channel subunit alpha-1 (1852 aa).

The Cytoplasmic segment spans residues 1 to 70 (MESGSGGGGG…KTCINIVEWK (70 aa)). Residues 57-354 (NPFRKTCINI…LVLGALSGEF (298 aa)) form an I repeat. Residues 71–86 (PFEIIILLTIFANCVA) form a helical membrane-spanning segment. Topologically, residues 87–107 (LAVFLPMPEEDTNNTNLTLES) are extracellular. Asparagine 99 and asparagine 102 each carry an N-linked (GlcNAc...) asparagine glycan. The helical transmembrane segment at 108 to 127 (LEYIFLVIFTLECFLKIVAY) threads the bilayer. The Cytoplasmic portion of the chain corresponds to 128–139 (GLLFHEGAYLRN). Residues 140–155 (CWNILDFVIVFMGLFT) traverse the membrane as a helical segment. The Extracellular segment spans residues 156-176 (LVVDTINTIAGVPTEKGGGFD). The chain crosses the membrane as a helical span at residues 177 to 195 (MKALRAFRVLRPLRLVSGV). Residues 196 to 214 (PSLQVVMSSILKSMLPLFH) are Cytoplasmic-facing. Residues 215–234 (IALLVFFMVHIYAIMGLELF) traverse the membrane as a helical segment. At 235-326 (KCKMHKTCYY…WINDAMGNDW (92 aa)) the chain is on the extracellular side. An N-linked (GlcNAc...) asparagine glycan is attached at asparagine 274. A helical membrane pass occupies residues 327–351 (PWIYFLTLILVGSFFILNLVLGALS). Topologically, residues 352–447 (GEFTKEREES…RKCHVWVKSK (96 aa)) are cytoplasmic. The binding to the beta subunit stretch occupies residues 374–391 (QQMDEDLEGYMEWITHAE). The II repeat unit spans residues 433–679 (NVVLRRKCHV…VFLAIAVDNL (247 aa)). The helical transmembrane segment at 448-466 (FFNWWVLLVVLLNTLVIAM) threads the bilayer. At 467–481 (EHHNQTEGLTSFQDT) the chain is on the extracellular side. Residue asparagine 470 is glycosylated (N-linked (GlcNAc...) asparagine). Residues 482–501 (ANVILLACFTIEMVMKMYAF) form a helical membrane-spanning segment. The Cytoplasmic portion of the chain corresponds to 502–509 (GPRAYFMS). A helical transmembrane segment spans residues 510–528 (IFNRFDCFVVTIGILEIIL). Topologically, residues 529 to 538 (VVSNIMTPLG) are extracellular. A helical transmembrane segment spans residues 539–557 (ISVMRCIRLLRLFKLTRYW). At 558 to 576 (TSLNNLVASLLNSVKSIAS) the chain is on the cytoplasmic side. Residues 577 to 596 (LLLLLFLFIVIFALLGMQVF) traverse the membrane as a helical segment. The Extracellular portion of the chain corresponds to 597–651 (GGKFNFPDRVIQRSNFDNFPQALISVFQVLTGEEWDSIMYNGIMAHGGPQSPGIL). A helical transmembrane segment spans residues 652–675 (VSIYFIILYVCGNFVLLNVFLAIA). Residues 676–815 (VDNLAEAESL…KLCHRIVNHT (140 aa)) lie on the Cytoplasmic side of the membrane. Residues 802–1084 (HKFRKLCHRI…IFVGFVIVTF (283 aa)) form an III repeat. A helical membrane pass occupies residues 816-834 (TFTNIILLFILLSSISLAA). At 835-850 (EDPIDPRSFRNKVLAY) the chain is on the extracellular side. A helical transmembrane segment spans residues 851–870 (ADIVFTTVFTIEIVLKMTVY). The Cytoplasmic segment spans residues 871–882 (GAFLHTGSFCRN). Residues 883–901 (SFNILDLIVVGVSLLSMGM) traverse the membrane as a helical segment. The Extracellular portion of the chain corresponds to 902–908 (ESSTISV). The helical transmembrane segment at 909 to 927 (VKILRVLRVLRPLRAINRA) threads the bilayer. At 928–946 (KGLKHVVQCMFVAIKTIGN) the chain is on the cytoplasmic side. A helical transmembrane segment spans residues 947–966 (IVLVTMLLDFMFACIGVQLF). Topologically, residues 967–1056 (KGKLYYCTDP…TGPLYNNRVG (90 aa)) are extracellular. The tract at residues 1004–1093 (RMWVNSDFNF…FQKQGEQEYK (90 aa)) is dihydropyridine binding. A helical transmembrane segment spans residues 1057-1081 (ISIFFIIYIIIIAFFMMNIFVGFVI). The Cytoplasmic portion of the chain corresponds to 1082-1134 (VTFQKQGEQEYKDCELDKNQRQCVQYALKARPLKCYIPKNPHQYRVWYFVTSC). The stretch at 1121–1405 (NPHQYRVWYF…LFVAIIMDNV (285 aa)) is one IV repeat. Residues 1135-1153 (YFEYLMFFLIMLNTLCLGI) traverse the membrane as a helical segment. Residues 1154–1168 (QHCNQSDHITKLSDT) lie on the Extracellular side of the membrane. Asparagine 1157 carries an N-linked (GlcNAc...) asparagine glycan. The chain crosses the membrane as a helical span at residues 1169–1188 (LNLIFTVLFTGEMIVKLIAF). The Cytoplasmic portion of the chain corresponds to 1189–1196 (KAKGYFGD). Residues 1197 to 1215 (PWNVFDFIIVVGSIVDVVL) traverse the membrane as a helical segment. The Extracellular portion of the chain corresponds to 1216–1252 (SEVDAALEARGGLWCLHGCAEVNPMQAIAEAENVRVS). A helical membrane pass occupies residues 1253-1271 (ITFFRLFRVLRLIKLLNRS). Residues 1272-1290 (EGIRNLLWTFIKSFQALPH) lie on the Cytoplasmic side of the membrane. Residues 1291-1310 (VGLLIVMLFFIYAVIGMQMF) form a helical membrane-spanning segment. The Extracellular portion of the chain corresponds to 1311–1377 (GKVALVDGTE…GEEYTCGSSI (67 aa)). The tract at residues 1358 to 1424 (LCDAKSDYGP…LGPHHLDEFK (67 aa)) is dihydropyridine binding. The phenylalkylamine binding stretch occupies residues 1370 to 1413 (EYTCGSSIAVFYFLSFYILCAFLIINLFVAIIMDNVDYLTRDWS). Residues 1378-1402 (AVFYFLSFYILCAFLIINLFVAIIM) form a helical membrane-spanning segment. Topologically, residues 1403 to 1852 (DNVDYLTRDW…TKPKENTSAV (450 aa)) are cytoplasmic. Positions 1418-1453 (HHLDEFKKIWAEYDPEATGRIKHLDVVTLLRRIQPP) constitute an EF-hand domain. Positions 1431, 1433, 1435, 1437, and 1442 each coordinate Ca(2+). Residues 1820-1852 (NRQSGKVTKRKRRPIPVPPGTKSTKPKENTSAV) form a disordered region.

Belongs to the calcium channel alpha-1 subunit (TC 1.A.1.11) family. Multisubunit complex consisting of alpha-1, alpha-2, beta and delta subunits in a 1:1:1:1 ratio. The channel activity is directed by the pore-forming and voltage-sensitive alpha-1 subunit. In many cases, this subunit is sufficient to generate voltage-sensitive calcium channel activity. The auxiliary subunits beta and alpha-2/delta linked by a disulfide bridge regulate the channel activity. An additional gamma subunit is present only in skeletal muscle L-type channel. Post-translationally, may be non-phosphorylated. As to expression, skeletal muscle.

It localises to the membrane. In terms of biological role, voltage-sensitive calcium channels (VSCC) mediate the entry of calcium ions into excitable cells and are also involved in a variety of calcium-dependent processes, including muscle contraction, gene expression, cell motility, cell division and cell death. The isoform alpha-1S gives rise to L-type calcium currents. Long-lasting (L-type) calcium channels belong to the 'high-voltage activated' (HVA) group. They are blocked by dihydropyridines (DHP), phenylalkylamines, and by benzothiazepines. Calcium channels containing the alpha-1S subunit play an important role in excitation-contraction coupling in skeletal muscle. The sequence is that of Dihydropyridine-sensitive L-type skeletal muscle calcium channel subunit alpha-1 from Cyprinus carpio (Common carp).